A 243-amino-acid chain; its full sequence is Pyridoxine 5'-phosphate synthase (243 aa).

Residue Asn6 coordinates 3-amino-2-oxopropyl phosphate. Position 8–9 (Asp8–His9) interacts with 1-deoxy-D-xylulose 5-phosphate. Arg17 contacts 3-amino-2-oxopropyl phosphate. Catalysis depends on His42, which acts as the Proton acceptor. 2 residues coordinate 1-deoxy-D-xylulose 5-phosphate: Arg44 and His49. Glu72 (proton acceptor) is an active-site residue. Thr102 is a binding site for 1-deoxy-D-xylulose 5-phosphate. The active-site Proton donor is the His192. 3-amino-2-oxopropyl phosphate-binding positions include Gly193 and Gly214–His215.

The protein belongs to the PNP synthase family. Homooctamer; tetramer of dimers.

It is found in the cytoplasm. The catalysed reaction is 3-amino-2-oxopropyl phosphate + 1-deoxy-D-xylulose 5-phosphate = pyridoxine 5'-phosphate + phosphate + 2 H2O + H(+). It participates in cofactor biosynthesis; pyridoxine 5'-phosphate biosynthesis; pyridoxine 5'-phosphate from D-erythrose 4-phosphate: step 5/5. Its function is as follows. Catalyzes the complicated ring closure reaction between the two acyclic compounds 1-deoxy-D-xylulose-5-phosphate (DXP) and 3-amino-2-oxopropyl phosphate (1-amino-acetone-3-phosphate or AAP) to form pyridoxine 5'-phosphate (PNP) and inorganic phosphate. This Sulfurihydrogenibium sp. (strain YO3AOP1) protein is Pyridoxine 5'-phosphate synthase.